Consider the following 278-residue polypeptide: NAD kinase (278 aa).

D56 functions as the Proton acceptor in the catalytic mechanism. Residues 56 to 57, 132 to 133, R158, D160, and 171 to 176 each bind NAD(+); these read DG, NE, and TAYNKS.

The protein belongs to the NAD kinase family. A divalent metal cation serves as cofactor.

It is found in the cytoplasm. It carries out the reaction NAD(+) + ATP = ADP + NADP(+) + H(+). In terms of biological role, involved in the regulation of the intracellular balance of NAD and NADP, and is a key enzyme in the biosynthesis of NADP. Catalyzes specifically the phosphorylation on 2'-hydroxyl of the adenosine moiety of NAD to yield NADP. The chain is NAD kinase from Streptococcus pyogenes serotype M1.